The following is a 726-amino-acid chain: Catalase-peroxidase (726 aa).

A cross-link (tryptophyl-tyrosyl-methioninium (Trp-Tyr) (with M-242)) is located at residues W93–Y216. The active-site Proton acceptor is H94. Positions Y216 to M242 form a cross-link, tryptophyl-tyrosyl-methioninium (Tyr-Met) (with W-93). Heme b is bound at residue H257. A disordered region spans residues G471–D490.

Belongs to the peroxidase family. Peroxidase/catalase subfamily. Homodimer or homotetramer. Heme b is required as a cofactor. In terms of processing, formation of the three residue Trp-Tyr-Met cross-link is important for the catalase, but not the peroxidase activity of the enzyme.

The enzyme catalyses H2O2 + AH2 = A + 2 H2O. It carries out the reaction 2 H2O2 = O2 + 2 H2O. Functionally, bifunctional enzyme with both catalase and broad-spectrum peroxidase activity. This is Catalase-peroxidase from Methylacidiphilum infernorum (isolate V4) (Methylokorus infernorum (strain V4)).